The following is a 190-amino-acid chain: Putative cyclic ADP-D-ribose synthase ThsB (190 aa).

This sequence belongs to the Thoeris B TIR-like family. In terms of assembly, homodimer.

It localises to the cytoplasm. With respect to regulation, activated upon phage infection. TIR-like domain-containing component of the Thoeris antiviral defense system, composed of ThsA and ThsB. Expression of ThsA and ThsB in B.subtilis (strain BEST7003) confers resistance to phages SBSphiC, SBSphiJ and SPO1. Phage infection activates this protein, generating a signal molecule that in turn activates ThsA. Its function is as follows. Probably hydrolyzes NAD(+) to make a cyclic ADP-D-ribose (cADPR) signaling molecule; might make 3'cADPR. In Bacillus amyloliquefaciens (strain Y2) (Bacillus amyloliquefaciens subsp. plantarum (strain B9601-Y2)), this protein is Putative cyclic ADP-D-ribose synthase ThsB.